Here is a 1234-residue protein sequence, read N- to C-terminus: Anion exchange protein 2 (1234 aa).

Residues 1–239 (MSSAPRRPAS…YNLQERRRIG (239 aa)) are disordered. The Cytoplasmic portion of the chain corresponds to 1–704 (MSSAPRRPAS…SDFRDALDPQ (704 aa)). Basic and acidic residues-rich tracts occupy residues 39–49 (LRTLGVERFEE) and 58–75 (GGEE…EYHR). Composition is skewed to basic residues over residues 76–85 (QSSHHIHHPL) and 94–110 (RRRK…RRRP). Ser-113 is modified (phosphoserine). A compositionally biased stretch (acidic residues) spans 120-133 (TIEEGEEDEDEVGE). Ser-145, Ser-171, and Ser-173 each carry phosphoserine. Gly residues predominate over residues 207-216 (TAGGDDGGAA). Residue Ser-240 is modified to Phosphoserine. Phosphothreonine is present on Thr-254. At Lys-271 the chain carries N6-methyllysine. The disordered stretch occupies residues 287 to 315 (RKNAKGSTQAAREGREPGPTPRARPRAPH). At Ser-440 the chain carries Phosphoserine. The tract at residues 446–467 (SLLGHHHAQGTESDPHVTEPLI) is disordered. The next 4 membrane-spanning stretches (helical) occupy residues 705 to 728 (CLAA…GLLG), 734 to 771 (LIGV…LLVF), 791 to 813 (VWIG…SFLV), and 823 to 843 (IFAF…LIKI). A membrane (anion exchange) region spans residues 705–1234 (CLAAVIFIYF…DEYNEMPMPV (530 aa)). Residues 844 to 893 (FQEHPLHGCSVSNDSEADSSSNNMTWAATTLAPDNSSASGQERPRGQPNT) are Extracellular-facing. N-linked (GlcNAc...) asparagine glycans are attached at residues Asn-856, Asn-866, and Asn-878. A helical transmembrane segment spans residues 894 to 911 (ALLSLVLMAGTFFIAFFL). The Cytoplasmic segment spans residues 912–926 (RKFKNSRFFPGRIRR). 5 helical membrane-spanning segments follow: residues 927-947 (VIGD…DYSI), 981-1003 (PFPV…LIFM), 1029-1050 (LLLI…LAAA), 1084-1129 (VTGL…IQFY), and 1156-1192 (MHLF…TVPL). The S-palmitoyl cysteine moiety is linked to residue Cys-1166.

The protein belongs to the anion exchanger (TC 2.A.31) family. Expressed in the parotid and submandibular glands (at protein level). Expressed in the gastric mucosa (at protein level). Expressed in the choroid plexus epithelium (at protein level). Expressed in the liver and gallbladder.

The protein localises to the apical cell membrane. The protein resides in the basolateral cell membrane. The enzyme catalyses hydrogencarbonate(in) + chloride(out) = hydrogencarbonate(out) + chloride(in). With respect to regulation, inhibited by 4,4'-diisothiocyanatostilbene-2,2'-disulfonic acid (DIDS). Functionally, sodium-independent anion exchanger which mediates the electroneutral exchange of chloride for bicarbonate ions across the cell membrane. Plays an important role in osteoclast differentiation and function. Regulates bone resorption and calpain-dependent actin cytoskeleton organization in osteoclasts via anion exchange-dependent control of pH. Essential for intracellular pH regulation in CD8(+) T-cells upon CD3 stimulation, modulating CD8(+) T-cell responses. The protein is Anion exchange protein 2 (Slc4a2) of Rattus norvegicus (Rat).